The chain runs to 262 residues: NAD-dependent protein deacylase (262 aa).

Residues 1–262 enclose the Deacetylase sirtuin-type domain; it reads MSNLRRAAEA…AALSPPGVPT (262 aa). 22–42 is an NAD(+) binding site; sequence GAGISADSGIPTFRDKLTGLW. Substrate contacts are provided by Tyr-67 and Arg-70. 101 to 104 provides a ligand contact to NAD(+); that stretch reads QNID. Catalysis depends on His-119, which acts as the Proton acceptor. The Zn(2+) site is built by Cys-127, Cys-130, Cys-155, and Cys-158. Residues 195–197, 221–223, and Ala-239 each bind NAD(+); these read GTS and NLE.

This sequence belongs to the sirtuin family. Class III subfamily. Zn(2+) serves as cofactor.

The protein resides in the cytoplasm. The enzyme catalyses N(6)-acetyl-L-lysyl-[protein] + NAD(+) + H2O = 2''-O-acetyl-ADP-D-ribose + nicotinamide + L-lysyl-[protein]. It catalyses the reaction N(6)-succinyl-L-lysyl-[protein] + NAD(+) + H2O = 2''-O-succinyl-ADP-D-ribose + nicotinamide + L-lysyl-[protein]. Functionally, NAD-dependent lysine deacetylase and desuccinylase that specifically removes acetyl and succinyl groups on target proteins. Modulates the activities of several proteins which are inactive in their acylated form. This Pseudomonas putida (strain ATCC 47054 / DSM 6125 / CFBP 8728 / NCIMB 11950 / KT2440) protein is NAD-dependent protein deacylase.